The sequence spans 372 residues: N-methyl-L-tryptophan oxidase (372 aa).

4-34 is an FAD binding site; the sequence is DLIIIGSGSVGAAAGYYATRAGLKVLMTDAH. An S-8alpha-FAD cysteine modification is found at Cys-307.

This sequence belongs to the MSOX/MTOX family. MTOX subfamily. In terms of assembly, monomer. The cofactor is FAD.

The enzyme catalyses N(alpha)-methyl-L-tryptophan + O2 + H2O = L-tryptophan + formaldehyde + H2O2. In terms of biological role, catalyzes the oxidative demethylation of N-methyl-L-tryptophan. This chain is N-methyl-L-tryptophan oxidase, found in Citrobacter koseri (strain ATCC BAA-895 / CDC 4225-83 / SGSC4696).